Here is a 169-residue protein sequence, read N- to C-terminus: Lipoprotein signal peptidase (169 aa).

Helical transmembrane passes span 4 to 24 (PICS…IVDL), 42 to 62 (LIPF…SFLA), 70 to 90 (WFFA…MYRS), and 102 to 122 (ALII…GAVI). Active-site residues include Asp123 and Asp141. A helical membrane pass occupies residues 137–157 (FNIADTAICIGAALVIFEGFI).

This sequence belongs to the peptidase A8 family.

Its subcellular location is the cell inner membrane. The enzyme catalyses Release of signal peptides from bacterial membrane prolipoproteins. Hydrolyzes -Xaa-Yaa-Zaa-|-(S,diacylglyceryl)Cys-, in which Xaa is hydrophobic (preferably Leu), and Yaa (Ala or Ser) and Zaa (Gly or Ala) have small, neutral side chains.. It functions in the pathway protein modification; lipoprotein biosynthesis (signal peptide cleavage). In terms of biological role, this protein specifically catalyzes the removal of signal peptides from prolipoproteins. The protein is Lipoprotein signal peptidase of Yersinia enterocolitica serotype O:8 / biotype 1B (strain NCTC 13174 / 8081).